The primary structure comprises 33 residues: Neurotoxin Nk-3FTx (33 aa).

Intrachain disulfides connect Cys3/Cys24 and Cys6/Cys11.

Expressed by the venom gland.

Its subcellular location is the secreted. Functionally, possible voltage-gated potassium channel (Kv) blocker. Decreases amplitude of compound action potential and conduction velocity in toad sciatic nerve. Has only mild anticoagulant activity even at a concentration of 5ug/ml. Shows no cytotoxicity towards human cell lines. This chain is Neurotoxin Nk-3FTx, found in Naja kaouthia (Monocled cobra).